Reading from the N-terminus, the 459-residue chain is Adenylosuccinate synthetase isozyme 1 C (459 aa).

The segment at Met1–Thr31 is disordered. Polar residues predominate over residues Tyr13–Gln22. GTP-binding positions include Gly44–Lys50 and Gly72–Thr74. Asp45 functions as the Proton acceptor in the catalytic mechanism. 2 residues coordinate Mg(2+): Asp45 and Gly72. Position 45 (Asp45) interacts with substrate. IMP is bound by residues Asp45–Lys48, Asn70–His73, Thr165, Arg179, Asn258, Thr273, and Arg337. Catalysis depends on His73, which acts as the Proton donor. Val333–Arg339 lines the substrate pocket. Residues Arg339, Lys365–Asp367, and Gly447–Lys450 each bind GTP.

The protein belongs to the adenylosuccinate synthetase family. Homodimer. It depends on Mg(2+) as a cofactor.

It localises to the cytoplasm. It carries out the reaction IMP + L-aspartate + GTP = N(6)-(1,2-dicarboxyethyl)-AMP + GDP + phosphate + 2 H(+). Its pathway is purine metabolism; AMP biosynthesis via de novo pathway; AMP from IMP: step 1/2. In terms of biological role, component of the purine nucleotide cycle (PNC), which interconverts IMP and AMP to regulate the nucleotide levels in various tissues, and which contributes to glycolysis and ammoniagenesis. Catalyzes the first committed step in the biosynthesis of AMP from IMP. In Salmo salar (Atlantic salmon), this protein is Adenylosuccinate synthetase isozyme 1 C (adss1c).